A 225-amino-acid polypeptide reads, in one-letter code: Enolase-phosphatase E1 (225 aa).

It belongs to the HAD-like hydrolase superfamily. MasA/MtnC family. Monomer. Mg(2+) is required as a cofactor.

It carries out the reaction 5-methylsulfanyl-2,3-dioxopentyl phosphate + H2O = 1,2-dihydroxy-5-(methylsulfanyl)pent-1-en-3-one + phosphate. It participates in amino-acid biosynthesis; L-methionine biosynthesis via salvage pathway; L-methionine from S-methyl-5-thio-alpha-D-ribose 1-phosphate: step 3/6. It functions in the pathway amino-acid biosynthesis; L-methionine biosynthesis via salvage pathway; L-methionine from S-methyl-5-thio-alpha-D-ribose 1-phosphate: step 4/6. Its function is as follows. Bifunctional enzyme that catalyzes the enolization of 2,3-diketo-5-methylthiopentyl-1-phosphate (DK-MTP-1-P) into the intermediate 2-hydroxy-3-keto-5-methylthiopentenyl-1-phosphate (HK-MTPenyl-1-P), which is then dephosphorylated to form the acireductone 1,2-dihydroxy-3-keto-5-methylthiopentene (DHK-MTPene). This chain is Enolase-phosphatase E1, found in Shewanella denitrificans (strain OS217 / ATCC BAA-1090 / DSM 15013).